We begin with the raw amino-acid sequence, 183 residues long: Probable chorismate pyruvate-lyase (183 aa).

Substrate contacts are provided by Arg79, Leu115, and Glu168.

It belongs to the UbiC family.

It is found in the cytoplasm. It carries out the reaction chorismate = 4-hydroxybenzoate + pyruvate. The protein operates within cofactor biosynthesis; ubiquinone biosynthesis. Its function is as follows. Removes the pyruvyl group from chorismate, with concomitant aromatization of the ring, to provide 4-hydroxybenzoate (4HB) for the ubiquinone pathway. This is Probable chorismate pyruvate-lyase from Chromohalobacter salexigens (strain ATCC BAA-138 / DSM 3043 / CIP 106854 / NCIMB 13768 / 1H11).